The primary structure comprises 48 residues: Ribulose bisphosphate carboxylase large chain (48 aa).

This sequence belongs to the RuBisCO large chain family. Type I subfamily. In terms of assembly, heterohexadecamer of 8 large chains and 8 small chains.

The protein resides in the plastid. It is found in the chloroplast. It carries out the reaction 2 (2R)-3-phosphoglycerate + 2 H(+) = D-ribulose 1,5-bisphosphate + CO2 + H2O. The enzyme catalyses D-ribulose 1,5-bisphosphate + O2 = 2-phosphoglycolate + (2R)-3-phosphoglycerate + 2 H(+). RuBisCO catalyzes two reactions: the carboxylation of D-ribulose 1,5-bisphosphate, the primary event in carbon dioxide fixation, as well as the oxidative fragmentation of the pentose substrate in the photorespiration process. Both reactions occur simultaneously and in competition at the same active site. The sequence is that of Ribulose bisphosphate carboxylase large chain (rbcL) from Pinus pinaster (Maritime pine).